Consider the following 200-residue polypeptide: Small ribosomal subunit protein uS4c (200 aa).

The S4 RNA-binding domain occupies 88–148 (IRLDNTIFNL…PKSYYIFKLC (61 aa)).

This sequence belongs to the universal ribosomal protein uS4 family. Part of the 30S ribosomal subunit.

The protein localises to the plastid. It localises to the apicoplast. Functionally, one of the primary rRNA binding proteins, it binds directly to 16S rRNA where it nucleates assembly of the body of the 30S subunit. In Eimeria tenella (Coccidian parasite), this protein is Small ribosomal subunit protein uS4c (rps4).